We begin with the raw amino-acid sequence, 591 residues long: DDB1- and CUL4-associated factor 8 (591 aa).

The segment covering 1–25 (MSNKRPNTTDGRTDLANGSLSSSPE) has biased composition (polar residues). The tract at residues 1-140 (MSNKRPNTTD…EDWVSSETTA (140 aa)) is disordered. A phosphoserine mark is found at Ser-22 and Ser-23. Residues 40-51 (IEVEASDLSLSL) carry the Nuclear export signal motif. 2 stretches are compositionally biased toward basic and acidic residues: residues 66–100 (RGTD…HGHS) and 118–131 (SRDQ…RALE). 3 positions are modified to phosphoserine: Ser-100, Ser-123, and Ser-124. WD repeat units follow at residues 185-224 (GHTG…PVLD), 228-269 (GHKS…CCKN), 275-315 (QHKG…PASK), 323-363 (EKKV…ENEN), 379-418 (ESKA…GAQY), 426-466 (RNNA…IIQF), and 470-509 (DKGG…STEL). Arg-198 is modified (omega-N-methylarginine; by PRMT1). Residues 552-591 (HRRWREPGVGATDADSDESPSSSDTSDEEEGPDRVQCMPS) form a disordered region.

The protein belongs to the WD repeat DCAF8 family. In terms of assembly, interacts with DDB1, CUL4A and CUL4B. Interacts with KPNA1, KPNB1 and XPO1. In terms of tissue distribution, expressed in the brain.

Its subcellular location is the nucleus. The protein localises to the cytoplasm. It participates in protein modification; protein ubiquitination. Functionally, may function as a substrate receptor for CUL4-DDB1 E3 ubiquitin-protein ligase complex. This chain is DDB1- and CUL4-associated factor 8 (Dcaf8), found in Mus musculus (Mouse).